The chain runs to 84 residues: Coiled-coil-helix-coiled-coil-helix domain-containing protein 7 (84 aa).

One can recognise a CHCH domain in the interval 12 to 54 (SNPCLEETDASTKCMDENQYQKDLCTSYFIKYKNCRKFWNGIM). 2 consecutive short sequence motifs (cx9C motif) follow at residues 15–25 (CLEETDASTKC) and 36–46 (CTSYFIKYKNC). 2 cysteine pairs are disulfide-bonded: Cys15-Cys46 and Cys25-Cys36.

Belongs to the CHCHD7 family.

The protein resides in the mitochondrion intermembrane space. The chain is Coiled-coil-helix-coiled-coil-helix domain-containing protein 7 (chchd7) from Xenopus laevis (African clawed frog).